Here is a 202-residue protein sequence, read N- to C-terminus: MNLAEGVQVVSFGILATMLIGTALGVVLATSIVYSAFLLGGVFISIAGMYLLLNGDFVAAAQVLVYVGAVNVLILFAIMLVNKRQDFTPYPSAGIRKVLTAIVSVGLFALLSTMVLATPWAYSTTPKVGDGSIIVIGEHFFSDFLLPFELASVLLLMAMVGAIILARREYLPEVTPSGLPQTVLTLPERPRELVGAGSETQE.

Transmembrane regions (helical) follow at residues 9-29 (VVSF…VVLA), 32-52 (IVYS…MYLL), 61-81 (AQVL…IMLV), 98-118 (VLTA…VLAT), and 144-164 (FLLP…GAII).

The protein belongs to the complex I subunit 6 family.

It localises to the membrane. The enzyme catalyses a plastoquinone + NADH + (n+1) H(+)(in) = a plastoquinol + NAD(+) + n H(+)(out). It catalyses the reaction a plastoquinone + NADPH + (n+1) H(+)(in) = a plastoquinol + NADP(+) + n H(+)(out). Functionally, NDH-1 shuttles electrons from NAD(P)H, via FMN and iron-sulfur (Fe-S) centers, to quinones in the respiratory chain. The immediate electron acceptor for the enzyme in this species is believed to be plastoquinone. Couples the redox reaction to proton translocation (for every two electrons transferred, four hydrogen ions are translocated across the cytoplasmic membrane), and thus conserves the redox energy in a proton gradient. In Nostoc sp. (strain PCC 7120 / SAG 25.82 / UTEX 2576), this protein is NAD(P)H-quinone oxidoreductase chain 6 (ndhG).